Consider the following 96-residue polypeptide: Molybdopterin synthase sulfur carrier subunit (96 aa).

Gly96 carries the 1-thioglycine; alternate modification. Residue Gly96 is modified to Glycyl adenylate; alternate.

This sequence belongs to the MoaD family. MOCS2A subfamily. As to quaternary structure, heterotetramer; composed of 2 small (MOCS2A) and 2 large (MOCS2B) subunits. Post-translationally, C-terminal thiocarboxylation occurs in 2 steps, it is first acyl-adenylated (-COAMP) via the hesA/moeB/thiF part of UBA4, then thiocarboxylated (-COSH) via the rhodanese domain of UBA4.

The protein resides in the cytoplasm. The protein operates within cofactor biosynthesis; molybdopterin biosynthesis. Functionally, acts as a sulfur carrier required for molybdopterin biosynthesis. Component of the molybdopterin synthase complex that catalyzes the conversion of precursor Z into molybdopterin by mediating the incorporation of 2 sulfur atoms into precursor Z to generate a dithiolene group. In the complex, serves as sulfur donor by being thiocarboxylated (-COSH) at its C-terminus by UBA4. After interaction with MOCS2B, the sulfur is then transferred to precursor Z to form molybdopterin. This Phaeosphaeria nodorum (strain SN15 / ATCC MYA-4574 / FGSC 10173) (Glume blotch fungus) protein is Molybdopterin synthase sulfur carrier subunit.